A 284-amino-acid chain; its full sequence is MPFSRLFGKKEKNQMDDIVEEGVQRVQELPMDKIFPNQFQPRTVFDQDKIDELARTIRIHGVIQPIVVREMEPDYYEIIAGERRFRAVLSLEMEKIPAIIQNLDDEEVAAIALIENLQREELTPIEEAKAYRSLLDMQDVTQEALAQRVGKSQSAIANKMRLLKLPETVQEAVLIKQISERHARSLLALETEEQQVALLAEIAENHWNVKQTEARIQEILGVKKQVATKKTKPKRQAISRDVRIAMNTIKQSVTMVKDNGMDLDFTEEETDDFYQITIQIPKKK.

A DNA-binding region (H-T-H motif) is located at residues 143-162; sequence EALAQRVGKSQSAIANKMRL.

Belongs to the ParB family.

It is found in the cytoplasm. The protein resides in the nucleoid. Functionally, effects nucleoid occlusion by binding relatively nonspecifically to DNA and preventing the assembly of the division machinery in the vicinity of the nucleoid, especially under conditions that disturb the cell cycle. It helps to coordinate cell division and chromosome segregation by preventing the formation of the Z ring through the nucleoid, which would cause chromosome breakage. This is Nucleoid occlusion protein from Listeria monocytogenes serovar 1/2a (strain ATCC BAA-679 / EGD-e).